Reading from the N-terminus, the 803-residue chain is 3',5'-cyclic-AMP phosphodiesterase 4D (803 aa).

Residues 1–103 (MEAEGSSVPA…SGASRVRHRG (103 aa)) form a disordered region. Phosphoserine occurs at positions 52 and 56. Over residues 58–85 (PPPPPPSPQPQLQPPPPPPLPPPPPPPG) the composition is skewed to pro residues. Phosphoserine is present on residues S137, S294, S296, S343, and S370. Residues 338–358 (EVEIPSPTQKEKEKKKRPMSQ) form a disordered region. One can recognise a PDEase domain in the interval 381 to 710 (VKTEQEDVLA…EWYQSTIPQS (330 aa)). A Glycyl lysine isopeptide (Lys-Gly) (interchain with G-Cter in SUMO) cross-link involves residue K382. H457 (proton donor) is an active-site residue. 3',5'-cyclic AMP is bound at residue H457. H457 provides a ligand contact to AMP. 4 residues coordinate Zn(2+): H461, H497, D498, and D615. The AMP site is built by D498, D615, N618, Q666, and F669. Residue D498 participates in Mg(2+) binding. D498 is a Mn(2+) binding site. Positions 666 and 669 each coordinate 3',5'-cyclic AMP. Disordered regions lie at residues 705–724 (STIP…GRQG) and 732–803 (ELTL…CPDT). Residues 757 to 768 (CSDSKTLCTQDS) show a composition bias toward polar residues. Residues 774-789 (PLDEQVEEEAVAEEES) show a composition bias toward acidic residues.

Belongs to the cyclic nucleotide phosphodiesterase family. PDE4 subfamily. In terms of assembly, homodimer for the long isoforms. Isoforms with truncated N-termini are monomeric. Binds ARRB2. Isoform 33 is part of a ternary complex containing PRKAR2A, PRKAR2B and AKAP9. Identified in a complex composed of RYR1, PDE4D, PKA, FKBP1A and protein phosphatase 1 (PP1). Interacts with PDE4DIP. Isoform 5 interacts (via N-terminal region) with SHANK2 (via proline-rich region); the interaction is increased in a PKA-dependent manner. Isoform 33, isoform 4, isoform 7, isoform 8 and isoform 9 but not isoform 32 and isoform 6 interact with SHANK2. Isoform 31 interacts weakly with SHANK2. Zn(2+) serves as cofactor. It depends on Mg(2+) as a cofactor. Requires Mn(2+) as cofactor. Post-translationally, isoform 1 and isoform 9 are rapidly activated by PKA through phosphorylation. Long isoforms that share a conserved PKA phosphorylation site in the N-terminus are also activated. Sumoylation of long isoforms by PIAS4 augments their activation by PKA phosphorylation and represses their inhibition by ERK phosphorylation. Expressed in epithelial cells. Isoform 33, isoform 4, isoform 5 and isoform 9 are expressed in brain. Isoform 33, isoform 5, isoform 8 and isoform 9 are expressed in heart (at protein level). Isoform 4 and isoform 6 are strongly expressed in cortex and cerebellum. Isoform 7 is strongly expressed in cortex and testis; weakly expressed in kidney, lung, spleen and cerebellum. Isoform 8 is strongly expressed in lung, heart and liver. Isoform 31, isoform 32, isoform 33, isoform 5 and isoform 9 are widely distributed.

It localises to the apical cell membrane. The protein localises to the cytoplasm. It is found in the membrane. The protein resides in the cytoskeleton. Its subcellular location is the microtubule organizing center. It localises to the centrosome. It carries out the reaction 3',5'-cyclic AMP + H2O = AMP + H(+). The protein operates within purine metabolism; 3',5'-cyclic AMP degradation; AMP from 3',5'-cyclic AMP: step 1/1. Activated by phosphatidic acid. Inhibited by rolipram. Functionally, hydrolyzes the second messenger cAMP, which is a key regulator of many important physiological processes. The protein is 3',5'-cyclic-AMP phosphodiesterase 4D (Pde4d) of Rattus norvegicus (Rat).